A 209-amino-acid polypeptide reads, in one-letter code: Small ribosomal subunit protein uS4 (209 aa).

The S4 RNA-binding domain maps to 99 to 160 (ARLDSVAYRM…RARASLRCKA (62 aa)).

This sequence belongs to the universal ribosomal protein uS4 family. As to quaternary structure, part of the 30S ribosomal subunit. Contacts protein S5. The interaction surface between S4 and S5 is involved in control of translational fidelity.

Its function is as follows. One of the primary rRNA binding proteins, it binds directly to 16S rRNA where it nucleates assembly of the body of the 30S subunit. With S5 and S12 plays an important role in translational accuracy. The protein is Small ribosomal subunit protein uS4 of Dechloromonas aromatica (strain RCB).